Here is a 390-residue protein sequence, read N- to C-terminus: Coiled-coil domain-containing protein 85C (390 aa).

Coiled-coil stretches lie at residues 26-86 (KEEL…RELC) and 116-146 (KEVG…KEII). The segment at 153-237 (RNGPGSRSSI…RSIPNGLNDS (85 aa)) is disordered. The span at 157-172 (GSRSSIDSQNSLTNLN) shows a compositional bias: polar residues. The span at 182 to 194 (DGSSTSSTGSAGS) shows a compositional bias: low complexity.

Belongs to the CCDC85 family.

It localises to the cell junction. It is found in the tight junction. Its subcellular location is the adherens junction. Functionally, may play a role in cell-cell adhesion and epithelium development. May play an important role in cortical development, especially in the maintenance of radial glia. This is Coiled-coil domain-containing protein 85C (ccdc85c) from Xenopus laevis (African clawed frog).